Consider the following 138-residue polypeptide: Ribulose bisphosphate carboxylase small subunit (138 aa).

Belongs to the RuBisCO small chain family. As to quaternary structure, heterohexadecamer of 8 large and 8 small subunits.

The protein resides in the plastid. Its subcellular location is the chloroplast. Its function is as follows. RuBisCO catalyzes two reactions: the carboxylation of D-ribulose 1,5-bisphosphate, the primary event in carbon dioxide fixation, as well as the oxidative fragmentation of the pentose substrate in the photorespiration process. Both reactions occur simultaneously and in competition at the same active site. Although the small subunit is not catalytic it is essential for maximal activity. This Pyropia yezoensis (Susabi-nori) protein is Ribulose bisphosphate carboxylase small subunit.